The chain runs to 213 residues: tRNA (guanine-N(7)-)-methyltransferase (213 aa).

S-adenosyl-L-methionine-binding residues include Asp-40, Glu-65, Asn-92, and Asp-118. Asp-118 is a catalytic residue. Substrate-binding residues include Lys-122 and Asp-154.

The protein belongs to the class I-like SAM-binding methyltransferase superfamily. TrmB family.

The catalysed reaction is guanosine(46) in tRNA + S-adenosyl-L-methionine = N(7)-methylguanosine(46) in tRNA + S-adenosyl-L-homocysteine. It participates in tRNA modification; N(7)-methylguanine-tRNA biosynthesis. Catalyzes the formation of N(7)-methylguanine at position 46 (m7G46) in tRNA. The chain is tRNA (guanine-N(7)-)-methyltransferase from Synechococcus elongatus (strain ATCC 33912 / PCC 7942 / FACHB-805) (Anacystis nidulans R2).